The sequence spans 157 residues: Arginine repressor (157 aa).

It belongs to the ArgR family.

Its subcellular location is the cytoplasm. It participates in amino-acid biosynthesis; L-arginine biosynthesis [regulation]. Its function is as follows. Regulates arginine biosynthesis genes. The protein is Arginine repressor of Bacteroides fragilis (strain YCH46).